We begin with the raw amino-acid sequence, 1164 residues long: Phytochrome D (1164 aa).

Positions 1 to 55 are disordered; the sequence is MVSGGGSKTSGGEAASSGHRRSRHTSAAEQAQSSANKALRSQNQQPQNHGGGTES. Over residues 25–55 the composition is skewed to polar residues; that stretch reads TSAAEQAQSSANKALRSQNQQPQNHGGGTES. The GAF domain occupies 255–437; it reads DIKLLCDTVV…AFGLQLNMEL (183 aa). Cysteine 360 contributes to the phytochromobilin binding site. PAS domains follow at residues 656–727 and 790–861; these read VARE…LKGD and DYKA…MIVL. Positions 938–1157 constitute a Histidine kinase domain; the sequence is YIFQVIKNPL…LIVIELPVPL (220 aa).

This sequence belongs to the phytochrome family. Homodimer. Post-translationally, contains one covalently linked phytochromobilin chromophore.

Regulatory photoreceptor which exists in two forms that are reversibly interconvertible by light: the Pr form that absorbs maximally in the red region of the spectrum and the Pfr form that absorbs maximally in the far-red region. Photoconversion of Pr to Pfr induces an array of morphogenic responses, whereas reconversion of Pfr to Pr cancels the induction of those responses. Pfr controls the expression of a number of nuclear genes including those encoding the small subunit of ribulose-bisphosphate carboxylase, chlorophyll A/B binding protein, protochlorophyllide reductase, rRNA, etc. It also controls the expression of its own gene(s) in a negative feedback fashion. This chain is Phytochrome D (PHYD), found in Arabidopsis thaliana (Mouse-ear cress).